Reading from the N-terminus, the 212-residue chain is Imidazole glycerol phosphate synthase subunit HisH (212 aa).

Residues 2-212 enclose the Glutamine amidotransferase type-1 domain; that stretch reads QTAIIDYGMG…LTMLKNFLNW (211 aa). Cysteine 85 functions as the Nucleophile in the catalytic mechanism. Residues histidine 194 and glutamate 196 contribute to the active site.

In terms of assembly, heterodimer of HisH and HisF.

It localises to the cytoplasm. The catalysed reaction is 5-[(5-phospho-1-deoxy-D-ribulos-1-ylimino)methylamino]-1-(5-phospho-beta-D-ribosyl)imidazole-4-carboxamide + L-glutamine = D-erythro-1-(imidazol-4-yl)glycerol 3-phosphate + 5-amino-1-(5-phospho-beta-D-ribosyl)imidazole-4-carboxamide + L-glutamate + H(+). It catalyses the reaction L-glutamine + H2O = L-glutamate + NH4(+). Its pathway is amino-acid biosynthesis; L-histidine biosynthesis; L-histidine from 5-phospho-alpha-D-ribose 1-diphosphate: step 5/9. In terms of biological role, IGPS catalyzes the conversion of PRFAR and glutamine to IGP, AICAR and glutamate. The HisH subunit catalyzes the hydrolysis of glutamine to glutamate and ammonia as part of the synthesis of IGP and AICAR. The resulting ammonia molecule is channeled to the active site of HisF. This Neisseria gonorrhoeae (strain ATCC 700825 / FA 1090) protein is Imidazole glycerol phosphate synthase subunit HisH.